The chain runs to 190 residues: Hypoxanthine/guanine phosphoribosyltransferase (190 aa).

This sequence belongs to the purine/pyrimidine phosphoribosyltransferase family. Archaeal HPRT subfamily. Homodimer.

Its subcellular location is the cytoplasm. It catalyses the reaction IMP + diphosphate = hypoxanthine + 5-phospho-alpha-D-ribose 1-diphosphate. The catalysed reaction is GMP + diphosphate = guanine + 5-phospho-alpha-D-ribose 1-diphosphate. The protein operates within purine metabolism; IMP biosynthesis via salvage pathway; IMP from hypoxanthine: step 1/1. Functionally, catalyzes a salvage reaction resulting in the formation of IMP that is energically less costly than de novo synthesis. This is Hypoxanthine/guanine phosphoribosyltransferase from Methanobacterium lacus (strain AL-21).